Here is a 138-residue protein sequence, read N- to C-terminus: Basic phospholipase A2 homolog Ts-K49b (138 aa).

The first 16 residues, 1 to 16 (MRTLWIMAVLLVGVEG), serve as a signal peptide directing secretion. Intrachain disulfides connect C42–C131, C44–C60, C65–C138, C66–C104, C73–C97, and C91–C102. The important for membrane-damaging activities in eukaryotes and bacteria; heparin-binding stretch occupies residues 121–133 (KKKKINLKLFCKK).

In terms of tissue distribution, expressed by the venom gland.

It localises to the secreted. In terms of biological role, snake venom phospholipase A2 homolog that lacks catalytic activity. It shows myotoxic and weak anticoagulant activities. A model of myotoxic mechanism has been proposed: an apo Lys49-PLA2 is activated by the entrance of a hydrophobic molecule (e.g. fatty acid) at the hydrophobic channel of the protein leading to a reorientation of a monomer. This reorientation causes a transition between 'inactive' to 'active' states, causing alignment of C-terminal and membrane-docking sites (MDoS) side-by-side and putting the membrane-disruption sites (MDiS) in the same plane, exposed to solvent and in a symmetric position for both monomers. The MDoS region stabilizes the toxin on membrane by the interaction of charged residues with phospholipid head groups. Subsequently, the MDiS region destabilizes the membrane with penetration of hydrophobic residues. This insertion causes a disorganization of the membrane, allowing an uncontrolled influx of ions (i.e. calcium and sodium), and eventually triggering irreversible intracellular alterations and cell death. This chain is Basic phospholipase A2 homolog Ts-K49b, found in Trimeresurus stejnegeri (Chinese green tree viper).